The sequence spans 256 residues: Pimeloyl-[acyl-carrier protein] methyl ester esterase (256 aa).

Residues 15 to 242 (HLVLLHGWGL…AAHAPFISHP (228 aa)) enclose the AB hydrolase-1 domain. Substrate is bound by residues Trp-22, 82–83 (SL), and 143–147 (FLALQ). The active-site Nucleophile is the Ser-82. Active-site residues include Asp-207 and His-235. His-235 provides a ligand contact to substrate.

It belongs to the AB hydrolase superfamily. Carboxylesterase BioH family. Monomer.

Its subcellular location is the cytoplasm. The catalysed reaction is 6-carboxyhexanoyl-[ACP] methyl ester + H2O = 6-carboxyhexanoyl-[ACP] + methanol + H(+). The protein operates within cofactor biosynthesis; biotin biosynthesis. Functionally, the physiological role of BioH is to remove the methyl group introduced by BioC when the pimeloyl moiety is complete. It allows to synthesize pimeloyl-ACP via the fatty acid synthetic pathway through the hydrolysis of the ester bonds of pimeloyl-ACP esters. This chain is Pimeloyl-[acyl-carrier protein] methyl ester esterase, found in Salmonella dublin (strain CT_02021853).